The following is a 223-amino-acid chain: MLIIGLCVVSMLLLSSNTFYLSGGVLGGSLVVNWFYPVLGKFGSILIGFVLALIGFIFCSGTSLIRLIVTFYHWLTMKNEQSENAEQEKSTEELEQIVIVKSDRSETENLDQNYLNVEQNSEIETVKPSLEAENISIGKSSSHLINISGLNPEVSIKSEYELANEENEKPQFSFGFDSESLPSVNLSSDSDEQRVSKNDFVAVWNKPVKTVVQEDLAIKSKCG.

2 helical membrane passes run 1–21 and 45–65; these read MLIIGLCVVSMLLLSSNTFYL and ILIGFVLALIGFIFCSGTSLI.

The protein localises to the cell membrane. This is an uncharacterized protein from Haemophilus influenzae (strain ATCC 51907 / DSM 11121 / KW20 / Rd).